The chain runs to 495 residues: Pentatricopeptide repeat-containing protein PPR5 homolog, chloroplastic (495 aa).

The tract at residues 1-24 (MLAYPTTSSPWPPRHHGAAAAPAA) is disordered. The transit peptide at 1–29 (MLAYPTTSSPWPPRHHGAAAAPAARRHMA) directs the protein to the chloroplast. 9 PPR repeats span residues 120–154 (DNGI…GCRP), 155–189 (DTSV…MKTI), 195–229 (NIVT…PVSP), 230–264 (DIYT…QCRP), 265–299 (DVIT…KEKP), 300–334 (THPT…GFKP), 335–365 (NYVT…LVSS), 370–404 (HLSS…GAVP), and 405–439 (SAST…GIVP). The segment at 455-495 (DKKPRTVPSKNSASKPDVESANNSGTDTSSKPNLSVWQVAA) is disordered. Positions 462–495 (PSKNSASKPDVESANNSGTDTSSKPNLSVWQVAA) are enriched in polar residues.

It belongs to the PPR family. P subfamily.

It is found in the plastid. It localises to the chloroplast. In terms of biological role, involved in the biogenesis of the plastid translation machinery by promoting the splicing of group II introns in chloroplasts. The protein is Pentatricopeptide repeat-containing protein PPR5 homolog, chloroplastic of Oryza sativa subsp. japonica (Rice).